Here is a 209-residue protein sequence, read N- to C-terminus: rRNA N(6)-adenosine-methyltransferase METTL5 (209 aa).

Residues Gln28, Thr31, Gly59, Cys62, Val64, Asp81, and 108-109 each bind S-adenosyl-L-methionine; that span reads DV.

This sequence belongs to the methyltransferase superfamily. PrmA family. Heterodimer; heterodimerizes with TRMT112. In terms of tissue distribution, expressed from very early development (8 post-conceptual weeks) and expression persists through adulthood in multiple substructures of the brain, including the cerebellar cortex, hippocampus, and striatum.

The protein localises to the nucleus. It is found in the presynapse. The protein resides in the postsynapse. It carries out the reaction adenosine(1832) in 18S rRNA + S-adenosyl-L-methionine = N(6)-methyladenosine(1832) in 18S rRNA + S-adenosyl-L-homocysteine + H(+). Its activity is regulated as follows. rRNA N6-adenosine-methyltransferase activity is inhibited by zinc. In terms of biological role, catalytic subunit of a heterodimer with TRMT112, which specifically methylates the 6th position of adenine in position 1832 of 18S rRNA. N6-methylation of adenine(1832) in 18S rRNA resides in the decoding center of 18S rRNA and is required for translation and embryonic stem cells (ESCs) pluripotency and differentiation. This chain is rRNA N(6)-adenosine-methyltransferase METTL5, found in Homo sapiens (Human).